We begin with the raw amino-acid sequence, 417 residues long: Serine hydroxymethyltransferase (417 aa).

(6S)-5,6,7,8-tetrahydrofolate is bound by residues Leu121 and 125–127; that span reads GHL. Lys230 carries the post-translational modification N6-(pyridoxal phosphate)lysine. (6S)-5,6,7,8-tetrahydrofolate is bound at residue 355–357; that stretch reads SPF.

It belongs to the SHMT family. In terms of assembly, homodimer. Requires pyridoxal 5'-phosphate as cofactor.

Its subcellular location is the cytoplasm. It carries out the reaction (6R)-5,10-methylene-5,6,7,8-tetrahydrofolate + glycine + H2O = (6S)-5,6,7,8-tetrahydrofolate + L-serine. It functions in the pathway one-carbon metabolism; tetrahydrofolate interconversion. Its pathway is amino-acid biosynthesis; glycine biosynthesis; glycine from L-serine: step 1/1. Catalyzes the reversible interconversion of serine and glycine with tetrahydrofolate (THF) serving as the one-carbon carrier. This reaction serves as the major source of one-carbon groups required for the biosynthesis of purines, thymidylate, methionine, and other important biomolecules. Also exhibits THF-independent aldolase activity toward beta-hydroxyamino acids, producing glycine and aldehydes, via a retro-aldol mechanism. The polypeptide is Serine hydroxymethyltransferase (Marinobacter nauticus (strain ATCC 700491 / DSM 11845 / VT8) (Marinobacter aquaeolei)).